We begin with the raw amino-acid sequence, 464 residues long: MRNWVRQIHMVGIGGSGMRGIAEVLLNLGYAVSGSDLRPGNSTLRLTDLGARIFSGHEAANVRGADVVVISSAIPESNPEVQAARELRIPVIRRAEMLAELMRFKQGIAIAGTHGKTTTTSLVASILGAGGLDPTFVIGGRLKSAGTHAALGSGEYLVAEADESDASFLYLSPVMAVVTNIDADHMETYGGSLDNLRGAFLQFLQRLPFYGLAVLCTDEAVVAGLIPELRTPVLRYGFGADADLQARDVTVQGIGSRFAVWRRVDSDYVHWLDVELGIPGRHNVLNALAAIGIASKVGIPESTIATALADFRGVGRRFELVGTFDGITVVDDYGHHPREIAATIAAARSVWPERPLVVAFQPHRYSRTQALFADFVSSLAAADRVILTDIYSAGEKALPGVTGRALAEAMAAQGMSVRFLPDLLTAPQQIRAELPAGAVLLTLGAGSIASLAAQWPQVFGEDPS.

112-118 (GTHGKTT) provides a ligand contact to ATP.

The protein belongs to the MurCDEF family.

The protein localises to the cytoplasm. It carries out the reaction UDP-N-acetyl-alpha-D-muramate + L-alanine + ATP = UDP-N-acetyl-alpha-D-muramoyl-L-alanine + ADP + phosphate + H(+). Its pathway is cell wall biogenesis; peptidoglycan biosynthesis. Functionally, cell wall formation. The protein is UDP-N-acetylmuramate--L-alanine ligase of Acidithiobacillus ferrooxidans (strain ATCC 23270 / DSM 14882 / CIP 104768 / NCIMB 8455) (Ferrobacillus ferrooxidans (strain ATCC 23270)).